The sequence spans 415 residues: JmjC domain-containing protein C (415 aa).

The disordered stretch occupies residues 97 to 140 (NEKNNQSNNNNNNNNNNNNNNNNNNNNNNNNNNNNNNNNNNKPK). A compositionally biased stretch (low complexity) spans 104–137 (NNNNNNNNNNNNNNNNNNNNNNNNNNNNNNNNNN). Residues 127-302 (NNNNNNNNNN…ELLKSNKLWC (176 aa)) form the JmjC domain.

This Dictyostelium discoideum (Social amoeba) protein is JmjC domain-containing protein C (jcdC).